The following is a 690-amino-acid chain: Lipase 2 (690 aa).

The first 37 residues, 1–37 (MLRGQEERKYSIRKYSIGVVSVLAATMFVVSSHEAQA), serve as a signal peptide directing secretion. Over residues 52-71 (LNQPGEQGNAITSHQMQSGK) the composition is skewed to polar residues. The segment at 52–266 (LNQPGEQGNA…KPTDKNTDNK (215 aa)) is disordered. Basic and acidic residues predominate over residues 72-81 (QLDDMHKENG). 3 stretches are compositionally biased toward polar residues: residues 82–114 (KSGTVTEGKDTLQSSKHQSTQNSKTIRTQNDNQ), 124–171 (SKQS…QPSI), and 185–206 (PTSTTPPSNDKTAPKSTKAQDA). Composition is skewed to basic and acidic residues over residues 225–237 (IDAKQDDTVRQSE) and 257–266 (KPTDKNTDNK). Active-site charge relay system residues include serine 412 and histidine 645.

This sequence belongs to the AB hydrolase superfamily. Lipase family.

The protein localises to the secreted. The enzyme catalyses a triacylglycerol + H2O = a diacylglycerol + a fatty acid + H(+). The chain is Lipase 2 (lip2) from Staphylococcus aureus (strain NCTC 8325 / PS 47).